A 349-amino-acid polypeptide reads, in one-letter code: MDIKGALNRIVNQLDLTTEEMQAVMRQIMTGRCTDAQIGAFLMGMRMKSETIDEIVGAVAVMRELADGVQLPTLKHVVDVVGTGGDGANIFNVSSAASFVVAAAGGKVAKHGNRAVSGKSGSADLLEAAGIYLELTSEQVARCIDTVGVGFMFAQVHHKAMKYAAGPRRELGLRTLFNMLGPLTNPAGVRHQVVGVFTQELCKPLAEVLKRLGSEHVLVVHSRDGLDEFSLAAATHIAELKDGEVREYEVRPEDFGIKSQTLMGLEVDSPQASLELIRDALGRRKTEAGQKAAELIVMNAGPALYAADLATSLHEGIQLAHDALHTGLAREKMDELVAFTAVYREENAQ.

5-phospho-alpha-D-ribose 1-diphosphate contacts are provided by residues Gly-82, 85 to 86 (GD), 92 to 95 (NVSS), 110 to 118 (KHGNRAVSG), and Ser-122. Anthranilate is bound at residue Gly-82. Ser-94 lines the Mg(2+) pocket. An anthranilate-binding site is contributed by Asn-113. Arg-168 contributes to the anthranilate binding site. Mg(2+) is bound by residues Asp-227 and Glu-228.

Belongs to the anthranilate phosphoribosyltransferase family. As to quaternary structure, homodimer. It depends on Mg(2+) as a cofactor.

The catalysed reaction is N-(5-phospho-beta-D-ribosyl)anthranilate + diphosphate = 5-phospho-alpha-D-ribose 1-diphosphate + anthranilate. Its pathway is amino-acid biosynthesis; L-tryptophan biosynthesis; L-tryptophan from chorismate: step 2/5. Catalyzes the transfer of the phosphoribosyl group of 5-phosphorylribose-1-pyrophosphate (PRPP) to anthranilate to yield N-(5'-phosphoribosyl)-anthranilate (PRA). The chain is Anthranilate phosphoribosyltransferase from Pseudomonas paraeruginosa (strain DSM 24068 / PA7) (Pseudomonas aeruginosa (strain PA7)).